Here is a 518-residue protein sequence, read N- to C-terminus: Retinal dehydrogenase 2 (518 aa).

Tyr-168 bears the Phosphotyrosine mark. NAD(+)-binding positions include 184–186, 210–213, and 264–266; these read IPW, KPAE, and STE. Glu-286 functions as the Proton acceptor in the catalytic mechanism. Cys-320 acts as the Nucleophile in catalysis. A Phosphoserine modification is found at Ser-351. NAD(+)-binding positions include 366–370 and Glu-417; that span reads KQYNK.

Belongs to the aldehyde dehydrogenase family. Homotetramer.

The protein resides in the cytoplasm. The catalysed reaction is retinal + NAD(+) + H2O = retinoate + NADH + 2 H(+). It carries out the reaction all-trans-retinal + NAD(+) + H2O = all-trans-retinoate + NADH + 2 H(+). The enzyme catalyses all-trans-13,14-dihydroretinal + NAD(+) + H2O = all-trans-13,14-dihydroretinoate + NADH + 2 H(+). The protein operates within cofactor metabolism; retinol metabolism. In terms of biological role, catalyzes the NAD-dependent oxidation of aldehyde substrates, such as all-trans-retinal and all-trans-13,14-dihydroretinal, to their corresponding carboxylic acids, all-trans-retinoate and all-trans-13,14-dihydroretinoate, respectively. Retinoate signaling is critical for the transcriptional control of many genes, for instance it is crucial for initiation of meiosis in both male and female. Recognizes retinal as substrate, both in its free form and when bound to cellular retinol-binding protein. Can metabolize octanal and decanal, but has only very low activity with benzaldehyde, acetaldehyde and propanal. Displays complete lack of activity with citral. In Homo sapiens (Human), this protein is Retinal dehydrogenase 2 (ALDH1A2).